Consider the following 354-residue polypeptide: 3-dehydroquinate synthase (354 aa).

NAD(+) contacts are provided by residues 100-104 (GATGD), 124-125 (TT), lysine 136, lysine 145, and 163-166 (FLAT). 3 residues coordinate Zn(2+): glutamate 178, histidine 242, and histidine 256.

The protein belongs to the sugar phosphate cyclases superfamily. Dehydroquinate synthase family. The cofactor is Co(2+). Requires Zn(2+) as cofactor. NAD(+) serves as cofactor.

Its subcellular location is the cytoplasm. It catalyses the reaction 7-phospho-2-dehydro-3-deoxy-D-arabino-heptonate = 3-dehydroquinate + phosphate. It participates in metabolic intermediate biosynthesis; chorismate biosynthesis; chorismate from D-erythrose 4-phosphate and phosphoenolpyruvate: step 2/7. In terms of biological role, catalyzes the conversion of 3-deoxy-D-arabino-heptulosonate 7-phosphate (DAHP) to dehydroquinate (DHQ). In Staphylococcus haemolyticus (strain JCSC1435), this protein is 3-dehydroquinate synthase.